The primary structure comprises 834 residues: Protein ROOT HAIR DEFECTIVE 3 homolog 2 (834 aa).

The Cytoplasmic segment spans residues 1 to 683 (MGENDDGCST…EAHKRNNNWL (683 aa)). A GB1/RHD3-type G domain is found at 37 to 252 (GLSYAVVAIM…ISPGGLAGDR (216 aa)). 47–54 (GPQSSGKS) is a GTP binding site. Residues 214-241 (MIVALSSYEEKEKQFEQEVAELRQRFFH) are a coiled coil. A helical transmembrane segment spans residues 684–704 (PPAWAIVLMIVLGFNEFMMLL). Residues 705–707 (KNP) lie on the Lumenal side of the membrane. A helical membrane pass occupies residues 708 to 728 (LYLLGFFVAFLLSKALWVQLD). Over 729–834 (IPREFQHGAV…NVQESEISQM (106 aa)) the chain is Cytoplasmic. Over residues 767-783 (TTQEVPDLSASQTYRQQ) the composition is skewed to polar residues. The segment at 767–834 (TTQEVPDLSA…NVQESEISQM (68 aa)) is disordered. Residues 784–803 (SPSHSISSTISESVASNISS) show a composition bias toward low complexity. A compositionally biased stretch (polar residues) spans 823-834 (TNNVQESEISQM).

It belongs to the TRAFAC class dynamin-like GTPase superfamily. GB1/RHD3 GTPase family. RHD3 subfamily. As to expression, expressed in roots, leaves, stems and flowers.

It is found in the endoplasmic reticulum membrane. Functionally, probable GTP-binding protein that may be involved in cell development. In Arabidopsis thaliana (Mouse-ear cress), this protein is Protein ROOT HAIR DEFECTIVE 3 homolog 2.